The primary structure comprises 278 residues: Transmembrane protein 45B (278 aa).

7 consecutive transmembrane segments (helical) span residues 7 to 27 (HALP…KYPL), 49 to 69 (IIEG…EQFV), 95 to 115 (YLFF…FNIV), 117 to 137 (LGLD…LFYF), 149 to 169 (IHSL…LEVI), 183 to 203 (LLIL…PPFG), and 215 to 235 (VMFI…ITAI). S273 and S275 each carry phosphoserine.

Belongs to the TMEM45 family.

It is found in the endosome membrane. It localises to the lysosome membrane. The protein resides in the golgi apparatus. The protein localises to the trans-Golgi network membrane. In terms of biological role, plays a role in innate immunity. The chain is Transmembrane protein 45B (Tmem45b) from Rattus norvegicus (Rat).